We begin with the raw amino-acid sequence, 209 residues long: uncharacterized protein (209 aa).

Helical transmembrane passes span Ala-10–Phe-32, Leu-37–Ile-59, and Phe-64–Val-86.

The protein resides in the cell membrane. This is an uncharacterized protein from Aquifex aeolicus (strain VF5).